A 241-amino-acid polypeptide reads, in one-letter code: DnaA regulatory inactivator Hda (241 aa).

The protein belongs to the DnaA family. HdA subfamily. In terms of assembly, the active form seems to be an ADP-bound monomer. Forms the RIDA complex (regulatory inactivation of DnaA) of ATP-DnaA, ADP-Hda and the DNA-loaded beta sliding clamp (dnaN).

In terms of biological role, mediates the interaction of DNA replication initiator protein DnaA with DNA polymerase subunit beta sliding clamp (dnaN). Stimulates hydrolysis of ATP-DnaA to ADP-DnaA, rendering DnaA inactive for reinitiation, a process called regulatory inhibition of DnaA or RIDA. The polypeptide is DnaA regulatory inactivator Hda (Salmonella arizonae (strain ATCC BAA-731 / CDC346-86 / RSK2980)).